Consider the following 930-residue polypeptide: Endoplasmic reticulum aminopeptidase 1 (930 aa).

The Cytoplasmic portion of the chain corresponds to 1–2 (MP). Residues 3–23 (SLLSLVLTFLAVSSPSCCQNS) form a helical; Signal-anchor for type II membrane protein membrane-spanning segment. Topologically, residues 24-930 (DTASPKASNG…WLQKERQELL (907 aa)) are lumenal. Residues N59 and N143 are each glycosylated (N-linked (GlcNAc...) asparagine). Substrate-binding positions include E172 and 306–310 (GAMEN). Zn(2+) is bound at residue H342. Residue E343 is the Proton acceptor of the active site. Positions 346 and 365 each coordinate Zn(2+). C393 and C432 are joined by a disulfide. Residues N403 and N655 are each glycosylated (N-linked (GlcNAc...) asparagine). A disulfide bridge links C725 with C732. N-linked (GlcNAc...) asparagine glycosylation is found at N749 and N890.

It belongs to the peptidase M1 family. Monomer. May also exist as a heterodimer; with ERAP2. Interacts with RBMX. It depends on Zn(2+) as a cofactor. Post-translationally, N-glycosylated. As to expression, ubiquitous.

The protein resides in the endoplasmic reticulum membrane. Functionally, aminopeptidase that plays a central role in peptide trimming, a step required for the generation of most HLA class I-binding peptides. Peptide trimming is essential to customize longer precursor peptides to fit them to the correct length required for presentation on MHC class I molecules. Strongly prefers substrates 9-16 residues long. Rapidly degrades 13-mer to a 9-mer and then stops. Preferentially hydrolyzes the residue Leu and peptides with a hydrophobic C-terminus, while it has weak activity toward peptides with charged C-terminus. May play a role in the inactivation of peptide hormones. May be involved in the regulation of blood pressure through the inactivation of angiotensin II and/or the generation of bradykinin in the kidney. This is Endoplasmic reticulum aminopeptidase 1 (Erap1) from Rattus norvegicus (Rat).